The chain runs to 428 residues: Glutamyl-tRNA reductase (428 aa).

Residues 50 to 53 (TCNR), S110, 115 to 117 (ETQ), and Q121 contribute to the substrate site. C51 (nucleophile) is an active-site residue. 190–195 (GAGEMG) provides a ligand contact to NADP(+).

The protein belongs to the glutamyl-tRNA reductase family. Homodimer.

The enzyme catalyses (S)-4-amino-5-oxopentanoate + tRNA(Glu) + NADP(+) = L-glutamyl-tRNA(Glu) + NADPH + H(+). The protein operates within porphyrin-containing compound metabolism; protoporphyrin-IX biosynthesis; 5-aminolevulinate from L-glutamyl-tRNA(Glu): step 1/2. Its function is as follows. Catalyzes the NADPH-dependent reduction of glutamyl-tRNA(Glu) to glutamate 1-semialdehyde (GSA). The polypeptide is Glutamyl-tRNA reductase (Campylobacter curvus (strain 525.92)).